A 480-amino-acid polypeptide reads, in one-letter code: MKTHYLSIALSVALSGCSLIPDYQRPPAPIQAGWPQGEAYAKLKAGTHRPSQTRDAELNWQVFFRDPVMRELIATALNNNRDLRQTALNVEAYRALHRIERSALLPRANTGVGATRQRLPADLSPTGEAGIQSQYDTTLSMSYELDMFGRLRSLERAALQEYLAAAETQRSMQIALIADVAIAYLSWRSDQAQLDLARSTLASYENSLNLIKSSREVGTASALDVRQARSLVETARVQQTLYTRQVAQDMNALQLLLGTKLPADLPISDVLDQPLAALSTGLPADLLLHRPDIRAAEHRLLAANANIGAARAAFFPSITLTAAAGTASHELDGLFEGGSGLWAFMPRINLPIFTAGRLRGNLDYRNVIKDINVAEYEKSIQTAFREVADGLAARGTFGEQLQAQRDLVDNNQAYYKLAYQRYDEGVDNYLAVLDAQRELFAAQQQFLSDRLNQLSSEVRLFKALGGGWDNISSQPLTAQN.

The first 16 residues, 1-16 (MKTHYLSIALSVALSG), serve as a signal peptide directing secretion. Residue C17 is the site of N-palmitoyl cysteine attachment. C17 is lipidated: S-diacylglycerol cysteine.

The protein belongs to the outer membrane factor (OMF) (TC 1.B.17) family.

The protein resides in the cell outer membrane. Functionally, probable outer membrane component of the SepABC efflux pump with unknown specificity. This chain is Probable efflux pump outer membrane protein SepC (sepC), found in Pseudomonas putida (strain ATCC 700007 / DSM 6899 / JCM 31910 / BCRC 17059 / LMG 24140 / F1).